A 302-amino-acid chain; its full sequence is Phosphoribosylaminoimidazole-succinocarboxamide synthase (302 aa).

This sequence belongs to the SAICAR synthetase family.

The enzyme catalyses 5-amino-1-(5-phospho-D-ribosyl)imidazole-4-carboxylate + L-aspartate + ATP = (2S)-2-[5-amino-1-(5-phospho-beta-D-ribosyl)imidazole-4-carboxamido]succinate + ADP + phosphate + 2 H(+). It participates in purine metabolism; IMP biosynthesis via de novo pathway; 5-amino-1-(5-phospho-D-ribosyl)imidazole-4-carboxamide from 5-amino-1-(5-phospho-D-ribosyl)imidazole-4-carboxylate: step 1/2. The protein is Phosphoribosylaminoimidazole-succinocarboxamide synthase of Cupriavidus pinatubonensis (strain JMP 134 / LMG 1197) (Cupriavidus necator (strain JMP 134)).